A 1400-amino-acid polypeptide reads, in one-letter code: DNA-directed RNA polymerase subunit beta' (1400 aa).

Zn(2+)-binding residues include C70, C72, C85, and C88. The Mg(2+) site is built by D460, D462, and D464. Positions 814, 888, 895, and 898 each coordinate Zn(2+).

It belongs to the RNA polymerase beta' chain family. In terms of assembly, the RNAP catalytic core consists of 2 alpha, 1 beta, 1 beta' and 1 omega subunit. When a sigma factor is associated with the core the holoenzyme is formed, which can initiate transcription. The cofactor is Mg(2+). Zn(2+) is required as a cofactor.

It carries out the reaction RNA(n) + a ribonucleoside 5'-triphosphate = RNA(n+1) + diphosphate. DNA-dependent RNA polymerase catalyzes the transcription of DNA into RNA using the four ribonucleoside triphosphates as substrates. The sequence is that of DNA-directed RNA polymerase subunit beta' from Vibrio vulnificus (strain CMCP6).